Consider the following 96-residue polypeptide: UPF0235 protein Shewmr4_1190 (96 aa).

This sequence belongs to the UPF0235 family.

This Shewanella sp. (strain MR-4) protein is UPF0235 protein Shewmr4_1190.